The chain runs to 72 residues: Translation initiation factor IF-1 (72 aa).

Residues 1 to 72 (MSKEDSIEVT…TKGRITFRHR (72 aa)) enclose the S1-like domain.

Belongs to the IF-1 family. Component of the 30S ribosomal translation pre-initiation complex which assembles on the 30S ribosome in the order IF-2 and IF-3, IF-1 and N-formylmethionyl-tRNA(fMet); mRNA recruitment can occur at any time during PIC assembly.

It localises to the cytoplasm. Functionally, one of the essential components for the initiation of protein synthesis. Stabilizes the binding of IF-2 and IF-3 on the 30S subunit to which N-formylmethionyl-tRNA(fMet) subsequently binds. Helps modulate mRNA selection, yielding the 30S pre-initiation complex (PIC). Upon addition of the 50S ribosomal subunit IF-1, IF-2 and IF-3 are released leaving the mature 70S translation initiation complex. The chain is Translation initiation factor IF-1 from Solibacter usitatus (strain Ellin6076).